We begin with the raw amino-acid sequence, 314 residues long: 4-hydroxy-3-methylbut-2-enyl diphosphate reductase (314 aa).

Cys12 contributes to the [4Fe-4S] cluster binding site. His41 and His74 together coordinate (2E)-4-hydroxy-3-methylbut-2-enyl diphosphate. Residues His41 and His74 each coordinate dimethylallyl diphosphate. Isopentenyl diphosphate contacts are provided by His41 and His74. Residue Cys96 participates in [4Fe-4S] cluster binding. His124 is a binding site for (2E)-4-hydroxy-3-methylbut-2-enyl diphosphate. Dimethylallyl diphosphate is bound at residue His124. His124 provides a ligand contact to isopentenyl diphosphate. Glu126 serves as the catalytic Proton donor. A (2E)-4-hydroxy-3-methylbut-2-enyl diphosphate-binding site is contributed by Thr167. Cys197 provides a ligand contact to [4Fe-4S] cluster. Residues Ser225, Ser226, Asn227, and Ser269 each contribute to the (2E)-4-hydroxy-3-methylbut-2-enyl diphosphate site. Dimethylallyl diphosphate contacts are provided by Ser225, Ser226, Asn227, and Ser269. 4 residues coordinate isopentenyl diphosphate: Ser225, Ser226, Asn227, and Ser269.

It belongs to the IspH family. The cofactor is [4Fe-4S] cluster.

The catalysed reaction is isopentenyl diphosphate + 2 oxidized [2Fe-2S]-[ferredoxin] + H2O = (2E)-4-hydroxy-3-methylbut-2-enyl diphosphate + 2 reduced [2Fe-2S]-[ferredoxin] + 2 H(+). It catalyses the reaction dimethylallyl diphosphate + 2 oxidized [2Fe-2S]-[ferredoxin] + H2O = (2E)-4-hydroxy-3-methylbut-2-enyl diphosphate + 2 reduced [2Fe-2S]-[ferredoxin] + 2 H(+). It participates in isoprenoid biosynthesis; dimethylallyl diphosphate biosynthesis; dimethylallyl diphosphate from (2E)-4-hydroxy-3-methylbutenyl diphosphate: step 1/1. The protein operates within isoprenoid biosynthesis; isopentenyl diphosphate biosynthesis via DXP pathway; isopentenyl diphosphate from 1-deoxy-D-xylulose 5-phosphate: step 6/6. In terms of biological role, catalyzes the conversion of 1-hydroxy-2-methyl-2-(E)-butenyl 4-diphosphate (HMBPP) into a mixture of isopentenyl diphosphate (IPP) and dimethylallyl diphosphate (DMAPP). Acts in the terminal step of the DOXP/MEP pathway for isoprenoid precursor biosynthesis. This is 4-hydroxy-3-methylbut-2-enyl diphosphate reductase from Haemophilus ducreyi (strain 35000HP / ATCC 700724).